The chain runs to 354 residues: Methionine import ATP-binding protein MetN (354 aa).

The 243-residue stretch at 8–250 (LDHIDITFRQ…PKEALTQEFI (243 aa)) folds into the ABC transporter domain. 42–49 (GYSGAGKS) contacts ATP.

This sequence belongs to the ABC transporter superfamily. Methionine importer (TC 3.A.1.24) family. The complex is composed of two ATP-binding proteins (MetN), two transmembrane proteins (MetI) and a solute-binding protein (MetQ).

Its subcellular location is the cell membrane. The catalysed reaction is L-methionine(out) + ATP + H2O = L-methionine(in) + ADP + phosphate + H(+). It carries out the reaction D-methionine(out) + ATP + H2O = D-methionine(in) + ADP + phosphate + H(+). Part of the ABC transporter complex MetNIQ involved in methionine import. Responsible for energy coupling to the transport system. This chain is Methionine import ATP-binding protein MetN, found in Streptococcus pyogenes serotype M3 (strain ATCC BAA-595 / MGAS315).